Here is a 208-residue protein sequence, read N- to C-terminus: Glycerol-3-phosphate acyltransferase (208 aa).

The next 5 helical transmembrane spans lie at 3–23 (ILLA…VVVS), 51–71 (KAAI…VWLA), 78–98 (DVAI…PVFF), 115–135 (AVHP…AFFF), and 140–160 (LAAL…FGMP).

Belongs to the PlsY family. Probably interacts with PlsX.

The protein localises to the cell inner membrane. It catalyses the reaction an acyl phosphate + sn-glycerol 3-phosphate = a 1-acyl-sn-glycero-3-phosphate + phosphate. It participates in lipid metabolism; phospholipid metabolism. Functionally, catalyzes the transfer of an acyl group from acyl-phosphate (acyl-PO(4)) to glycerol-3-phosphate (G3P) to form lysophosphatidic acid (LPA). This enzyme utilizes acyl-phosphate as fatty acyl donor, but not acyl-CoA or acyl-ACP. The protein is Glycerol-3-phosphate acyltransferase of Burkholderia orbicola (strain MC0-3).